Reading from the N-terminus, the 192-residue chain is E3 ubiquitin-protein ligase RNF185 (192 aa).

Residues 1–27 (MASKGPSASASPENSSAGGPSGSSNGA) are compositionally biased toward low complexity. A disordered region spans residues 1–30 (MASKGPSASASPENSSAGGPSGSSNGAGES). Residues 1-130 (MASKGPSASA…GGFQGFGFGD (130 aa)) lie on the Cytoplasmic side of the membrane. The tract at residues 29–80 (ESGGQDSTFECNICLDTAKDAVISLCGHLFCWPCLHQWLETRPNRQVCPVCK) is required for ubiquitin ligase activity and protection against ER stress-induced cell death. Residues 39–80 (CNICLDTAKDAVISLCGHLFCWPCLHQWLETRPNRQVCPVCK) form an RING-type zinc finger. Residues 90-123 (PLYGRGSTGQQDPREKTPPRPQGQRPEPENRGGF) are disordered. The helical transmembrane segment at 131–151 (GGFQMSFGIGAFPFGIFATAF) threads the bilayer. The Mitochondrial intermembrane segment spans residues 152–171 (NINDGRPPPAVPGTPQYVDE). The helical transmembrane segment at 172-192 (QFLSRLFLFVALVIMFWLLIA) threads the bilayer.

As to quaternary structure, interacts with ATG5 and BNIP1. In terms of tissue distribution, ubiquitously expressed.

It localises to the mitochondrion outer membrane. The protein localises to the endoplasmic reticulum membrane. It catalyses the reaction S-ubiquitinyl-[E2 ubiquitin-conjugating enzyme]-L-cysteine + [acceptor protein]-L-lysine = [E2 ubiquitin-conjugating enzyme]-L-cysteine + N(6)-ubiquitinyl-[acceptor protein]-L-lysine.. Its pathway is protein modification; protein ubiquitination. In terms of biological role, E3 ubiquitin-protein ligase that regulates selective mitochondrial autophagy by mediating 'Lys-63'-linked polyubiquitination of BNIP1. Acts in the endoplasmic reticulum (ER)-associated degradation (ERAD) pathway, which targets misfolded proteins that accumulate in the endoplasmic reticulum (ER) for ubiquitination and subsequent proteasome-mediated degradation. Protects cells from ER stress-induced apoptosis. Responsible for the cotranslational ubiquitination and degradation of CFTR in the ERAD pathway. Also acts as a regulator of the innate antiviral response by catalyzing 'Lys-27'-linked polyubiquitination of CGAS at 'Lys-173' and 'Lys-384', thereby promoting CGAS cyclic GMP-AMP synthase activity. Preferentially associates with the E2 enzymes UBE2J1 and UBE2J2. This Homo sapiens (Human) protein is E3 ubiquitin-protein ligase RNF185.